Consider the following 628-residue polypeptide: MTPRQVRHGLAVLQQHNLLFYHTDPGAEFASYEANPDNAYNLVRTGKILEMIDTSFGAPAKDVMQSLLLSGQTRVSDLVAAYKEKIEQGNQTESTVGDDNDFGIEANGVNGDSKADKKAGPLIKSTAHLNTIICRLVEAELIDVVHPKTFESSEDILKTVEKEVMQKHFPAGVKGNKAKVELQERIAEGLRKVRGESKSLKRKLEQNGSAAKRRKLLAGFGMANGAHDEDMDPALDPRQVIRINYEKCLVDLRNRRLVQYATDMTGETTAYVYGVLLKLLTKDLSRCRADLVMDAVGDKDEEDDKGPGSVTTDQILDNLKTSVDLSLGIGKAERGQVSSTAAEKIELYPPKKKVLIEEAEVDGEASADEDEGEDESSEESDYDSDYKASTTHGTNGVNGTNGTNGTKVKFDESAAPKERRMDRPAQLRQHLLMLAESTQHFVRHCGPNEWTVDFVPVMKSLREAELDSVIERTCGRQGLRLVRILRAKGKLDEKALPNVALMRKPELQQKMLEMQTAGFVSVQEVPRDLKADVKKSFFLWFCDMDSSLSRLLDTGYVTMVHCLQVLEALRRKERDVLETTKRTDVRGREKDTMRKSYYERYSRFLESERKLFAQVMRVDDLVSVLRDF.

The span at 360–383 (EVDGEASADEDEGEDESSEESDYD) shows a compositional bias: acidic residues. Residues 360-422 (EVDGEASADE…SAAPKERRMD (63 aa)) form a disordered region. The span at 390–406 (TTHGTNGVNGTNGTNGT) shows a compositional bias: low complexity. Over residues 408–422 (VKFDESAAPKERRMD) the composition is skewed to basic and acidic residues. The leucine-zipper stretch occupies residues 555–576 (GYVTMVHCLQVLEALRRKERDV).

This sequence belongs to the RNA polymerase beta chain family. As to quaternary structure, component of the RNA polymerase III (Pol III) complex consisting of 17 subunits.

It is found in the nucleus. In terms of biological role, DNA-dependent RNA polymerase catalyzes the transcription of DNA into RNA using the four ribonucleoside triphosphates as substrates. Specific core component of RNA polymerase III which synthesizes small RNAs, such as 5S rRNA and tRNAs. In Chaetomium globosum (strain ATCC 6205 / CBS 148.51 / DSM 1962 / NBRC 6347 / NRRL 1970) (Soil fungus), this protein is DNA-directed RNA polymerase III subunit RPC3 (RPC82).